The primary structure comprises 403 residues: Phosphoglycerate kinase (403 aa).

Substrate-binding positions include 22 to 24 (DLN), arginine 37, 60 to 63 (HLGR), arginine 119, and arginine 156. ATP is bound by residues lysine 206, glycine 302, glutamate 333, and 359–362 (GGDS).

It belongs to the phosphoglycerate kinase family. In terms of assembly, monomer.

It is found in the cytoplasm. The enzyme catalyses (2R)-3-phosphoglycerate + ATP = (2R)-3-phospho-glyceroyl phosphate + ADP. It functions in the pathway carbohydrate degradation; glycolysis; pyruvate from D-glyceraldehyde 3-phosphate: step 2/5. This is Phosphoglycerate kinase from Streptomyces griseus subsp. griseus (strain JCM 4626 / CBS 651.72 / NBRC 13350 / KCC S-0626 / ISP 5235).